Here is a 329-residue protein sequence, read N- to C-terminus: D-alanine--D-alanine ligase (329 aa).

In terms of domain architecture, ATP-grasp spans 120–326 (KLWYDALDIP…FHEFLEDCIN (207 aa)). 150–205 (AFEKWGKVFVKAARQGSSVGCYSVAEKQAIAKAVNDAFGYSDQVLVEKAVKPRELE) contributes to the ATP binding site. Residues aspartate 280, glutamate 293, and asparagine 295 each coordinate Mg(2+).

This sequence belongs to the D-alanine--D-alanine ligase family. The cofactor is Mg(2+). It depends on Mn(2+) as a cofactor.

It localises to the cytoplasm. The catalysed reaction is 2 D-alanine + ATP = D-alanyl-D-alanine + ADP + phosphate + H(+). The protein operates within cell wall biogenesis; peptidoglycan biosynthesis. Cell wall formation. This chain is D-alanine--D-alanine ligase, found in Vibrio parahaemolyticus serotype O3:K6 (strain RIMD 2210633).